The sequence spans 331 residues: Biotin synthase (331 aa).

A Radical SAM core domain is found at 46 to 275 (YYGKKVKLNM…TKEIRISGGR (230 aa)). [4Fe-4S] cluster-binding residues include Cys-64, Cys-68, and Cys-71. [2Fe-2S] cluster is bound by residues Cys-108, Cys-140, Cys-200, and Arg-270.

It belongs to the radical SAM superfamily. Biotin synthase family. In terms of assembly, homodimer. It depends on [4Fe-4S] cluster as a cofactor. Requires [2Fe-2S] cluster as cofactor.

The catalysed reaction is (4R,5S)-dethiobiotin + (sulfur carrier)-SH + 2 reduced [2Fe-2S]-[ferredoxin] + 2 S-adenosyl-L-methionine = (sulfur carrier)-H + biotin + 2 5'-deoxyadenosine + 2 L-methionine + 2 oxidized [2Fe-2S]-[ferredoxin]. It participates in cofactor biosynthesis; biotin biosynthesis; biotin from 7,8-diaminononanoate: step 2/2. Its function is as follows. Catalyzes the conversion of dethiobiotin (DTB) to biotin by the insertion of a sulfur atom into dethiobiotin via a radical-based mechanism. This chain is Biotin synthase, found in Lysinibacillus sphaericus (strain C3-41).